We begin with the raw amino-acid sequence, 224 residues long: Uracil phosphoribosyltransferase (224 aa).

Arg-92 serves as a coordination point for 5-phospho-alpha-D-ribose 1-diphosphate. Residue Lys-109 coordinates GTP. 5-phospho-alpha-D-ribose 1-diphosphate contacts are provided by residues Arg-117 and 145–153; that span reads DPMLATGGT. Residues Ile-210 and 215–217 each bind uracil; that span reads GDA. Position 216 (Asp-216) interacts with 5-phospho-alpha-D-ribose 1-diphosphate.

It belongs to the UPRTase family. Requires Mg(2+) as cofactor.

It catalyses the reaction UMP + diphosphate = 5-phospho-alpha-D-ribose 1-diphosphate + uracil. The protein operates within pyrimidine metabolism; UMP biosynthesis via salvage pathway; UMP from uracil: step 1/1. Allosterically activated by GTP. Catalyzes the conversion of uracil and 5-phospho-alpha-D-ribose 1-diphosphate (PRPP) to UMP and diphosphate. This is Uracil phosphoribosyltransferase (UPP) from Nicotiana tabacum (Common tobacco).